The primary structure comprises 372 residues: Glutamate 5-kinase (372 aa).

An ATP-binding site is contributed by Lys14. 3 residues coordinate substrate: Ser54, Asp141, and Asn153. 173–174 lines the ATP pocket; that stretch reads TD. Residues 280–358 enclose the PUA domain; that stretch reads RGHVVIDAGA…GEIETVLGYM (79 aa).

It belongs to the glutamate 5-kinase family.

Its subcellular location is the cytoplasm. It carries out the reaction L-glutamate + ATP = L-glutamyl 5-phosphate + ADP. The protein operates within amino-acid biosynthesis; L-proline biosynthesis; L-glutamate 5-semialdehyde from L-glutamate: step 1/2. Its function is as follows. Catalyzes the transfer of a phosphate group to glutamate to form L-glutamate 5-phosphate. This is Glutamate 5-kinase from Burkholderia orbicola (strain AU 1054).